Here is a 501-residue protein sequence, read N- to C-terminus: MAFWQPSQRLYLPPTPVTKVLCSEQYIRRKDVFYHGETERMLTVGHPYYEIKQSGSGKTIPKVSPNQYRVFRILLPDPNQFALPDKAMYDPSKERLVWAVVGVQVSRGQPLGGSVSGHSYQNTLIDAENVSKKVNAQGTDDRKQGGMDVKQQQILLLGCTPAIGEYWTTARPCVTDRPETGSCPPIELKNKPIEDGDMMDIGFGAANFKELNATKSDLPLDIAKDICLYPDYLKMTEEAAGNSMFFFARKEQVYVRHIWSRGGTDKEMPPEAYFLKPKGGDQTQKMPSILFGVPSGSLVSTDGQLFNRPYWLFRAQGMNNGICWLNQLFVTVGDNTRGTTLTITVPTSGSPLTEYDTSKFNVFQRHVEEYKLAFVFQLCSVTLSPETVSHLQGLMPSILEHWDINMQPPTSSILEDTYRYLESPATKCADNVTPMGPEDPYAGLKFWEVNLKERLSLDLDQFPLGRRFLAQQGLGCSTRKRVAPVPKVTEKRIVRKRRKGN.

It belongs to the papillomaviridae L1 protein family. In terms of assembly, self-assembles into homopentamers. The capsid has an icosahedral symmetry and consists of 72 capsomers, with each capsomer being a pentamer of L1. Interacts with the minor capsid protein L2; this interaction is necessary for viral genome encapsidation. Interacts with protein E2; this interaction enhances E2-dependent replication and transcription activation.

The protein resides in the virion. It is found in the host nucleus. In terms of biological role, forms an icosahedral capsid with a T=7 symmetry and a 50 nm diameter. The capsid is composed of 72 pentamers linked to each other by disulfide bonds and associated with L2 proteins. Binds to heparan sulfate proteoglycans on cell surface of basal layer keratinocytes to provide initial virion attachment. This binding mediates a conformational change in the virus capsid that facilitates efficient infection. The virion enters the host cell via endocytosis. During virus trafficking, L1 protein dissociates from the viral DNA and the genomic DNA is released to the host nucleus. The virion assembly takes place within the cell nucleus. Encapsulates the genomic DNA together with protein L2. The polypeptide is Major capsid protein L1 (Cervus elaphus (Red deer)).